The sequence spans 410 residues: Chaperone protein dnaJ 15 (410 aa).

The 66-residue stretch at 17-82 folds into the J domain; it reads DPYEVLCVSK…EKRRHYDNAG (66 aa). Positions 284–344 form a coiled coil; that stretch reads AKTYEDTTEK…TVDELLKQRD (61 aa). The disordered stretch occupies residues 351–410; the sequence is SVVKTPSGNNLSNGSSSKAQGDESKGDGDSAGEEGGTENRDKSKRKWFNLNLKGSDKKLG. Over residues 357 to 367 the composition is skewed to low complexity; the sequence is SGNNLSNGSSS.

The protein belongs to the DnaJ family. B/II subfamily. In terms of tissue distribution, expressed at high levels in root cap, root tip meristematic region and elongation zones, and at lower levels in mature part of roots (at protein level). Constitutively expressed in seedlings, etiolated or not, roots, rosette leaves, cauline leaves, stems, flowers, siliques and pollen.

It is found in the cytoplasm. The protein resides in the cytoskeleton. The protein localises to the endoplasmic reticulum membrane. Its subcellular location is the golgi apparatus membrane. Functionally, plays a continuous role in plant development probably in the structural organization of compartments. Seems to be involved in early gravitropic signal transduction within the gravity-perceiving cells (statocytes), where it influences pH changes and auxin distribution. Probably affects the localization and/or activity of auxin efflux carrier components (PIN proteins) or other proteins involved in lateral auxin transport. The sequence is that of Chaperone protein dnaJ 15 (ATJ15) from Arabidopsis thaliana (Mouse-ear cress).